The chain runs to 324 residues: MSIRVGIVGISGFGGGEAMRLIAGHPAFEPVYAAGEGSAGQRLSERFPGVPAKLADLVIEKWDPSRLPQLDVLFASLPTGASRDALARIPREVKIVDIGGDHRYADGWTYGLADVWPEAIAGKTRIANPGCFPAAALTALAPLLADRLIAPENIVIDAKTGISGAGRGGGAGFGYAESNENLIPYGLLKHVHMPEIESTIARISGGSAAGLVFTPHLVPMTRGILATIYARGRATSDQCLDAARSFYAGRAFVRVTDKPPQTKWATGSNLAFVSYAADPDRNLVIALGVVDNLGKGAAGQAVQNANLMCGLPETAGLEGAPVWP.

Cys131 is a catalytic residue.

The protein belongs to the NAGSA dehydrogenase family. Type 1 subfamily.

It is found in the cytoplasm. It carries out the reaction N-acetyl-L-glutamate 5-semialdehyde + phosphate + NADP(+) = N-acetyl-L-glutamyl 5-phosphate + NADPH + H(+). The protein operates within amino-acid biosynthesis; L-arginine biosynthesis; N(2)-acetyl-L-ornithine from L-glutamate: step 3/4. In terms of biological role, catalyzes the NADPH-dependent reduction of N-acetyl-5-glutamyl phosphate to yield N-acetyl-L-glutamate 5-semialdehyde. The protein is N-acetyl-gamma-glutamyl-phosphate reductase of Bradyrhizobium sp. (strain ORS 278).